The following is a 123-amino-acid chain: Holo-[acyl-carrier-protein] synthase (123 aa).

Mg(2+)-binding residues include aspartate 8 and glutamate 56.

The protein belongs to the P-Pant transferase superfamily. AcpS family. The cofactor is Mg(2+).

It is found in the cytoplasm. The enzyme catalyses apo-[ACP] + CoA = holo-[ACP] + adenosine 3',5'-bisphosphate + H(+). In terms of biological role, transfers the 4'-phosphopantetheine moiety from coenzyme A to a Ser of acyl-carrier-protein. The protein is Holo-[acyl-carrier-protein] synthase of Clostridium botulinum (strain Eklund 17B / Type B).